The following is a 384-amino-acid chain: Galactokinase (384 aa).

35–38 (EHTD) provides a ligand contact to substrate. ATP contacts are provided by residues Ser-69 and 125 to 131 (GAGLSSS). The Mg(2+) site is built by Ser-131 and Glu-163. Catalysis depends on Asp-175, which acts as the Proton acceptor. Tyr-224 serves as a coordination point for substrate.

It belongs to the GHMP kinase family. GalK subfamily.

It localises to the cytoplasm. The enzyme catalyses alpha-D-galactose + ATP = alpha-D-galactose 1-phosphate + ADP + H(+). The protein operates within carbohydrate metabolism; galactose metabolism. Functionally, catalyzes the transfer of the gamma-phosphate of ATP to D-galactose to form alpha-D-galactose-1-phosphate (Gal-1-P). This Aliivibrio fischeri (strain ATCC 700601 / ES114) (Vibrio fischeri) protein is Galactokinase.